The primary structure comprises 121 residues: Large ribosomal subunit protein bL19 (121 aa).

This sequence belongs to the bacterial ribosomal protein bL19 family.

This protein is located at the 30S-50S ribosomal subunit interface and may play a role in the structure and function of the aminoacyl-tRNA binding site. In Chlamydia muridarum (strain MoPn / Nigg), this protein is Large ribosomal subunit protein bL19 (rplS).